Here is a 175-residue protein sequence, read N- to C-terminus: MKSGSSTLNPYAAAYVPLSKREGSLVDTKPVTQQHMQQQHHQQQPYYGYGVQGMGSYQGTQMSPKKSPSEMVYNHQLKDEDLEMDMDIEYLLATYPGLSQESINDVYLANTCDLDATIEMLNQLEIYSTEAEEYLPDTLDIGDVPEIITESSKQKNDGSSASSSSGIRNANVSSS.

The PAM2-like motif lies at 7–17; sequence TLNPYAAAYVP. The CUE domain maps to 83 to 126; sequence EMDMDIEYLLATYPGLSQESINDVYLANTCDLDATIEMLNQLEI. The segment at 145–175 is disordered; that stretch reads PEIITESSKQKNDGSSASSSSGIRNANVSSS. Residues 166–175 are compositionally biased toward polar residues; that stretch reads GIRNANVSSS.

In Arabidopsis thaliana (Mouse-ear cress), this protein is Polyadenylate-binding protein-interacting protein 6 (CID6).